Reading from the N-terminus, the 66-residue chain is Small vasohibin-binding protein (66 aa).

Residues 1–23 (MDPPARKEKTKVKESVSRVEKAK) are compositionally biased toward basic and acidic residues. Positions 1–31 (MDPPARKEKTKVKESVSRVEKAKQKSAQQEL) are disordered. Residues 5–52 (ARKEKTKVKESVSRVEKAKQKSAQQELKQRQRAEIYALNRVMTELEQQ) are a coiled coil.

The protein belongs to the SVBP family. As to quaternary structure, interacts with VASH1 and VASH2.

The protein resides in the cytoplasm. The protein localises to the secreted. It is found in the cytoskeleton. Its function is as follows. Enhances the tyrosine carboxypeptidase activity of VASH1 and VASH2, thereby promoting the removal of the C-terminal tyrosine residue of alpha-tubulin. This activity is critical for spindle function and accurate chromosome segregation during mitosis since microtubule detyronisation regulates mitotic spindle length and postioning. Also required to enhance the solubility and secretion of VASH1 and VASH2. Plays a role in axon and excitatory synapse formation. The chain is Small vasohibin-binding protein from Homo sapiens (Human).